The primary structure comprises 404 residues: CD2 homolog (404 aa).

The signal sequence occupies residues 1–16 (MFITLIFLSYINIVLS). At 17–225 (NNYWARLNET…QNYFLENIHT (209 aa)) the chain is on the extracellular side. Residues Asn24, Asn87, Asn92, Asn96, Asn122, Asn139, Asn167, Asn193, Asn200, and Asn206 are each glycosylated (N-linked (GlcNAc...) asparagine; by host). 2 cysteine pairs are disulfide-bonded: Cys140-Cys207 and Cys147-Cys190. Residues 226–246 (LFYIIIFIVSGLIASIFISII) form a helical membrane-spanning segment. The Cytoplasmic portion of the chain corresponds to 247-404 (TFLSLRKRKK…ISLIHVDRII (158 aa)). Residues 260–295 (EIESPPPESNEEEQCQHDDTTSIHEPSPREPLLPKP) are disordered. A compositionally biased stretch (basic and acidic residues) spans 273-287 (QCQHDDTTSIHEPSP). A run of 7 repeats spans residues 322–327 (NPCPPP), 328–333 (KPCPPP), 334–339 (KPCPPP), 340–345 (KPCPPP), 346–351 (KPCPPP), 352–357 (KPCPPP), and 358–363 (KPCPPP). Residues 322–363 (NPCPPPKPCPPPKPCPPPKPCPPPKPCPPPKPCPPPKPCPPP) are 7 X 6 AA tandem repeats of [KN]-P-C-P-P-P. Positions 357–388 (PKPCPPPKPCSSPESYSPPKPLPSIPLLPNIP) are enriched in pro residues. Residues 357 to 390 (PKPCPPPKPCSSPESYSPPKPLPSIPLLPNIPPL) are disordered.

It belongs to the asfivirus CD2 homolog protein family. In terms of assembly, both glycosylated and nonglycosylated forms interact (via C-terminus) with the host AP-1 complex. Cleaved into two fragments of 63 kDa and 26 kDa containing respectively the glycosylated N-terminus and the nonglycosylated C-terminus. A full-length 89-kDa glycosylated form also exists.

Its subcellular location is the host membrane. The protein localises to the virion membrane. It localises to the host Golgi apparatus. In terms of biological role, may play an immunosuppressive role by inhibiting lymphocyte proliferation and subsequently facilitating viral replication and generalization of infection. Responsible for viral hemadsorption, which may help viral spread. Increases virus replication in the tick vector at the step of virus uptake or replication in the tick gut. May play a role in the host Golgi reorganization to yield viral factories. May play a role in host cell penetration. This chain is CD2 homolog, found in African swine fever virus (isolate Tick/South Africa/Pretoriuskop Pr4/1996) (ASFV).